Here is a 141-residue protein sequence, read N- to C-terminus: Cytochrome c-type biogenesis protein CcmE (141 aa).

The Cytoplasmic portion of the chain corresponds to 1–7 (MRARTRR). Residues 8 to 28 (LYTFGIAAALIVAAAALAFFA) form a helical; Signal-anchor for type II membrane protein membrane-spanning segment. The Periplasmic portion of the chain corresponds to 29–141 (LRENANLFYT…RELKPLEAGG (113 aa)). 2 residues coordinate heme: His-125 and Tyr-129.

This sequence belongs to the CcmE/CycJ family.

The protein localises to the cell inner membrane. Functionally, heme chaperone required for the biogenesis of c-type cytochromes. Transiently binds heme delivered by CcmC and transfers the heme to apo-cytochromes in a process facilitated by CcmF and CcmH. This Hyphomonas neptunium (strain ATCC 15444) protein is Cytochrome c-type biogenesis protein CcmE.